The sequence spans 285 residues: Pantothenate synthetase (285 aa).

Residue 30 to 37 (MGNLHAGH) coordinates ATP. H37 (proton donor) is an active-site residue. Q61 contributes to the (R)-pantoate binding site. A beta-alanine-binding site is contributed by Q61. 149-152 (GEKD) contacts ATP. Q155 is a binding site for (R)-pantoate. 186 to 189 (LSSR) serves as a coordination point for ATP.

Belongs to the pantothenate synthetase family. Homodimer.

It is found in the cytoplasm. The catalysed reaction is (R)-pantoate + beta-alanine + ATP = (R)-pantothenate + AMP + diphosphate + H(+). It functions in the pathway cofactor biosynthesis; (R)-pantothenate biosynthesis; (R)-pantothenate from (R)-pantoate and beta-alanine: step 1/1. Its function is as follows. Catalyzes the condensation of pantoate with beta-alanine in an ATP-dependent reaction via a pantoyl-adenylate intermediate. The chain is Pantothenate synthetase from Ectopseudomonas mendocina (strain ymp) (Pseudomonas mendocina).